A 241-amino-acid chain; its full sequence is Large ribosomal subunit protein uL1 (241 aa).

The protein belongs to the universal ribosomal protein uL1 family. In terms of assembly, part of the 50S ribosomal subunit.

Functionally, binds directly to 23S rRNA. The L1 stalk is quite mobile in the ribosome, and is involved in E site tRNA release. Protein L1 is also a translational repressor protein, it controls the translation of the L11 operon by binding to its mRNA. The chain is Large ribosomal subunit protein uL1 from Streptomyces coelicolor (strain ATCC BAA-471 / A3(2) / M145).